We begin with the raw amino-acid sequence, 689 residues long: DNA-directed RNA polymerase subunit beta' (689 aa).

Positions 69, 71, 87, and 90 each coordinate Zn(2+). Positions 489, 491, and 493 each coordinate Mg(2+).

Belongs to the RNA polymerase beta' chain family. RpoC1 subfamily. In terms of assembly, in plastids the minimal PEP RNA polymerase catalytic core is composed of four subunits: alpha, beta, beta', and beta''. When a (nuclear-encoded) sigma factor is associated with the core the holoenzyme is formed, which can initiate transcription. Mg(2+) is required as a cofactor. Zn(2+) serves as cofactor.

The protein localises to the plastid. It localises to the chloroplast. It catalyses the reaction RNA(n) + a ribonucleoside 5'-triphosphate = RNA(n+1) + diphosphate. DNA-dependent RNA polymerase catalyzes the transcription of DNA into RNA using the four ribonucleoside triphosphates as substrates. The sequence is that of DNA-directed RNA polymerase subunit beta' from Helianthus annuus (Common sunflower).